A 214-amino-acid polypeptide reads, in one-letter code: ATP phosphoribosyltransferase (214 aa).

It belongs to the ATP phosphoribosyltransferase family. Short subfamily. Heteromultimer composed of HisG and HisZ subunits.

Its subcellular location is the cytoplasm. It catalyses the reaction 1-(5-phospho-beta-D-ribosyl)-ATP + diphosphate = 5-phospho-alpha-D-ribose 1-diphosphate + ATP. It participates in amino-acid biosynthesis; L-histidine biosynthesis; L-histidine from 5-phospho-alpha-D-ribose 1-diphosphate: step 1/9. Its function is as follows. Catalyzes the condensation of ATP and 5-phosphoribose 1-diphosphate to form N'-(5'-phosphoribosyl)-ATP (PR-ATP). Has a crucial role in the pathway because the rate of histidine biosynthesis seems to be controlled primarily by regulation of HisG enzymatic activity. The sequence is that of ATP phosphoribosyltransferase from Alcanivorax borkumensis (strain ATCC 700651 / DSM 11573 / NCIMB 13689 / SK2).